The sequence spans 148 residues: Pivalyl-CoA mutase small subunit (148 aa).

One can recognise a B12-binding domain in the interval 8–138; that stretch reads PLRVLVTKIG…TALGQKSRAE (131 aa). H21 lines the adenosylcob(III)alamin pocket.

It belongs to the acyl-CoA mutase small subunit family. In terms of assembly, monomer in the absence of the PCM large subunit. Weakly interacts with the PCM large subunit; an alpha(2)beta(2) stoichiometry seems to represent the active state of the enzyme. Adenosylcob(III)alamin serves as cofactor.

It carries out the reaction 3-methylbutanoyl-CoA = 2,2-dimethylpropanoyl-CoA. In terms of biological role, together with Xaut_5043, catalyzes the reversible isomerization between pivalyl-CoA and isovaleryl-CoA, using radical chemistry. Does not exhibit isobutyryl-CoA mutase (ICM) activity. This is Pivalyl-CoA mutase small subunit from Xanthobacter autotrophicus (strain ATCC BAA-1158 / Py2).